A 344-amino-acid chain; its full sequence is GTPase Obg (344 aa).

Positions 1–159 constitute an Obg domain; it reads MKFLDLCKVY…RTLWLRLKLI (159 aa). Residues 126–146 are disordered; it reads GNLHFKSSTNQAPRRSNPGQD. Residues 130–144 are compositionally biased toward polar residues; that stretch reads FKSSTNQAPRRSNPG. The OBG-type G domain occupies 160-327; the sequence is ADVGLLGLPN…VLRKLRGEIS (168 aa). GTP is bound by residues 166-173, 191-195, 212-215, 279-282, and 308-310; these read GLPNAGKS, FTTLH, DIPG, NKID, and SGV. Mg(2+) is bound by residues Ser-173 and Thr-193.

This sequence belongs to the TRAFAC class OBG-HflX-like GTPase superfamily. OBG GTPase family. Monomer. Mg(2+) serves as cofactor.

It localises to the cytoplasm. Functionally, an essential GTPase which binds GTP, GDP and possibly (p)ppGpp with moderate affinity, with high nucleotide exchange rates and a fairly low GTP hydrolysis rate. Plays a role in control of the cell cycle, stress response, ribosome biogenesis and in those bacteria that undergo differentiation, in morphogenesis control. This is GTPase Obg from Roseobacter denitrificans (strain ATCC 33942 / OCh 114) (Erythrobacter sp. (strain OCh 114)).